Consider the following 1721-residue polypeptide: Intersectin-1 (1721 aa).

Residues 21 to 109 form the EH 1 domain; sequence ERAKHDQQFH…PVMKQQPVAI (89 aa). Residues 53 to 88 form the EF-hand 1 domain; it reads LPQPVLAQIWALADMNNDGRMDQVEFSIAMKLIKLK. Ca(2+) is bound by residues Asp66, Asn68, Asp70, Arg72, and Glu77. Ser203 bears the Phosphoserine mark. The 90-residue stretch at 221–310 folds into the EH 2 domain; it reads SRLKYRQLFN…PEYIPPSFRR (90 aa). An EF-hand 2 domain is found at 254-289; the sequence is LPQAQLASIWNLSDIDQDGKLTAEEFILAMHLIDVA. Residues Asp267, Asp269, Asp271, Lys273, and Glu278 each coordinate Ca(2+). A Phosphoserine modification is found at Ser318. 2 disordered regions span residues 322-348 and 650-701; these read STSVDQRLPEEPVLEDEQQQLEKKLPV and QRRA…KQEA. Residues 326–702 are KLERQ; it reads DQRLPEEPVL…GEEKGKQEAQ (377 aa). Positions 355 to 659 form a coiled coil; sequence RENFERGNLE…QRRAQERDKQ (305 aa). Ser687 carries the phosphoserine modification. Residues 740-806 form the SH3 1 domain; that stretch reads VKVVYYRALY…PANYAEKIPE (67 aa). The segment at 836-868 is disordered; that stretch reads LAVTSSEPSTTPNNWADFSSTWPTSTNEKPETD. Polar residues predominate over residues 838-862; that stretch reads VTSSEPSTTPNNWADFSSTWPTSTN. At Thr897 the chain carries Phosphothreonine. Ser901, Ser902, and Ser904 each carry phosphoserine. The SH3 2 domain occupies 913–971; sequence VEGLQAQALYPWRAKKDNHLNFNKNDVITVLEQQDMWWFGEVQGQKGWFPKSYVKLISG. 3 positions are modified to phosphoserine: Ser978, Ser986, and Ser995. SH3 domains follow at residues 1002 to 1060 and 1074 to 1138; these read VSGE…LKDS and KKPE…LLSP. A required for interaction with FCHSD2 region spans residues 1074 to 1138; it reads KKPEIAQVIA…PANYVKLLSP (65 aa). A Bipartite nuclear localization signal; in isoform 2 motif is present at residues 1104-1127; it reads RKKNPGGWWEGELQARGKKRQIGW. Ser1137 is subject to Phosphoserine. The residue at position 1144 (Thr1144) is a Phosphothreonine. Positions 1155–1214 constitute an SH3 5 domain; the sequence is AAVCQVIGMYDYTAQNDDELAFNKGQIINVLNKEDPDWWKGEVNGQVGLFPSNYVKLTTD. One can recognise a DH domain in the interval 1237–1423; it reads KRQGYIHELI…EELCSQVNEG (187 aa). Residues 1462-1571 enclose the PH domain; that stretch reads KFLHSGKLYK…WVQKIKAASE (110 aa). The region spanning 1579 to 1695 is the C2 domain; sequence KKREKAYLVR…KKDQGSKGPV (117 aa). Residue Ser1645 is modified to Phosphoserine. Residues Asp1667, Ser1670, and Asp1673 each contribute to the Ca(2+) site.

Interacts (via DH domain) with CDC42. Interacts (via SH3 domain 1) with WASL. Interacts with dynamin, SNAP25 and SNAP23. Interacts with clathrin-associated proteins and other components of the endocytic machinery, such as SPIN90, EPS15, EPN1, EPN2, STON2, FCHO1, FCHO2 and DAB2. Interacts (via SH3 domains) with REPS1 and SGIP1. Interacts with ARHGAP31. Interacts with ADAM15. Interacts with PRRT2. Interacts (via SH3 domain 4) with FCHSD2 (via SH3 domain 2). Interacts (via SH3 domain 1) with DENND2B. Interacts (via SH3 domains) with CBL. Isoform 2: Interacts with CBL and DNM1. Isoform 2: Interacts with LMNA. Isoform 2: Interacts with importin subunit KPNA1; this is likely to mediate its import into the nucleus. Interacts with DNM2. In terms of assembly, (Microbial infection) Interacts with vaccinia virus protein A36. It depends on Ca(2+) as a cofactor. As to expression, isoform 1 is expressed almost exclusively in the brain. Isoform 2 is detected in brain, spleen, lung, liver, heart, skeletal muscle and kidney. Isoform 5 is primarily expressed in brain, spleen, lung and kidney (at protein level). Isoform 1 and isoform 2 are detected in brain. Isoform 2 is ubiquitous in adult and fetal tissues with high expression in skeletal muscle, heart, spleen, ovary, testis and all fetal tissues tested and low expression in thymus, blood, lung, liver and pancreas. Isoform 1 is expressed almost exclusively in the brain, in all brain regions. Not expressed in the spinal cord.

Its subcellular location is the endomembrane system. The protein resides in the synapse. It is found in the synaptosome. It localises to the cell projection. The protein localises to the lamellipodium. Its subcellular location is the cell membrane. The protein resides in the membrane. It is found in the clathrin-coated pit. It localises to the recycling endosome. The protein localises to the endosome. Its subcellular location is the cytoplasmic vesicle. The protein resides in the cytoplasm. It is found in the nucleus envelope. Adapter protein that provides a link between the endocytic membrane traffic and the actin assembly machinery. Acts as a guanine nucleotide exchange factor (GEF) for CDC42, and thereby stimulates actin nucleation mediated by WASL and the ARP2/3 complex. Plays a role in the assembly and maturation of clathrin-coated vesicles. Recruits FCHSD2 to clathrin-coated pits. Involved in endocytosis of activated EGFR, and probably also other growth factor receptors. Involved in endocytosis of integrin beta-1 (ITGB1) and transferrin receptor (TFR); internalization of ITGB1 as DAB2-dependent cargo but not TFR may involve association with DAB2. Promotes ubiquitination and subsequent degradation of EGFR, and thereby contributes to the down-regulation of EGFR-dependent signaling pathways. In chromaffin cells, required for normal exocytosis of catecholamines. Required for rapid replenishment of release-ready synaptic vesicles at presynaptic active zones. Inhibits ARHGAP31 activity toward RAC1. Its function is as follows. Plays a role in synaptic vesicle endocytosis in brain neurons. This chain is Intersectin-1, found in Homo sapiens (Human).